Here is a 399-residue protein sequence, read N- to C-terminus: Argininosuccinate synthase (399 aa).

ATP is bound at residue 9-17 (AYSGGLDTS). An L-citrulline-binding site is contributed by Y85. Position 115 (G115) interacts with ATP. L-aspartate is bound by residues T117, N121, and D122. N121 provides a ligand contact to L-citrulline. Residues R125, S173, E258, and Y270 each coordinate L-citrulline.

Belongs to the argininosuccinate synthase family. Type 1 subfamily. In terms of assembly, homotetramer.

The protein resides in the cytoplasm. It carries out the reaction L-citrulline + L-aspartate + ATP = 2-(N(omega)-L-arginino)succinate + AMP + diphosphate + H(+). The protein operates within amino-acid biosynthesis; L-arginine biosynthesis; L-arginine from L-ornithine and carbamoyl phosphate: step 2/3. The sequence is that of Argininosuccinate synthase from Streptococcus gordonii (strain Challis / ATCC 35105 / BCRC 15272 / CH1 / DL1 / V288).